The primary structure comprises 92 residues: RQC P-site tRNA stabilizing factor (92 aa).

In terms of domain architecture, S4 RNA-binding spans Met5 to Glu65.

It belongs to the RqcP family. In terms of assembly, associates with stalled 50S ribosomal subunits. Binds to RqcH, 23S rRNA and the P-site tRNA. Does not require RqcH for association with 50S subunits.

Its function is as follows. Key component of the ribosome quality control system (RQC), a ribosome-associated complex that mediates the extraction of incompletely synthesized nascent chains from stalled ribosomes and their subsequent degradation. RqcH recruits Ala-charged tRNA, and with RqcP directs the elongation of stalled nascent chains on 50S ribosomal subunits, leading to non-templated C-terminal alanine extensions (Ala tail). The Ala tail promotes nascent chain degradation. RqcP is associated with the translocation-like movement of the peptidyl-tRNA from the A-site into the P-site. This chain is RQC P-site tRNA stabilizing factor, found in Listeria innocua serovar 6a (strain ATCC BAA-680 / CLIP 11262).